We begin with the raw amino-acid sequence, 481 residues long: MAEKITSRAQDYSQWYIDIVRFAKLADYSDVRGCMVIRPNGYAIWEKMQAALDRMFKETGHVNAYFPLFIPESFIQKEAEHIEGFAPECAVVTHGGGEELQEKLYVRPTSETIIWSSYKKWIQSYRDLPILINQWANVVRWEMRTRLFLRTTEFLWQEGHTAHATETEAKEEVLRMIEVYRHFAEEYMAIPVIVGMKTESEKFAGAHETFCIEAMMQDGKALQAGTSHHLGQNFAKAFDCKFQTKDGSLEYVWASSWGVSTRLIGALIMAHSDDKGLVLPPKLASRQAVIVPILKGDKAAVLEKAVELEKMLKAAGVQVFLDDSEQNTPGWKFAEYELQGIPVRIELGPRDVAAGKCVVARRDTSEKETLEIDTAFPQKIKDLLDSIQTGLFERALRFREEKTKVVTTYEELKAQVEVGFAVAHWDGTPETEAKIKEETKATIRCLPVSKDFATKYGINTEGKCVFSGNPSKQMVVFAKAY.

It belongs to the class-II aminoacyl-tRNA synthetase family. ProS type 3 subfamily. As to quaternary structure, homodimer.

The protein resides in the cytoplasm. The enzyme catalyses tRNA(Pro) + L-proline + ATP = L-prolyl-tRNA(Pro) + AMP + diphosphate. Its function is as follows. Catalyzes the attachment of proline to tRNA(Pro) in a two-step reaction: proline is first activated by ATP to form Pro-AMP and then transferred to the acceptor end of tRNA(Pro). The chain is Proline--tRNA ligase from Chloroherpeton thalassium (strain ATCC 35110 / GB-78).